A 325-amino-acid chain; its full sequence is MIARIWSGESPLWRLLLPLSWLYGLVSGAIRLSYKLGFKRAWRAPVPVVVVGNLTAGGNGKTPVVIWLVEKLQQRGVRVGVVSRGYGGKAAAYPLLLTPETTTAEAGDEPVLIYQRTGAPVAVAPERAAAVKAILAAHNVQIIITDDGLQHYRLARDIEIVVIDGVRRFGNGWWLPAGPMRERASRLKTVDAAIVNGGVARAGEIPMQLAPGLAVNLRTGARCDVAQLSNIVAMAGIGHPPRFFATLEACGAHPQKCVPLADHQTLSPADVQALVGEGQTLVMTEKDAVKCRAFAEDNWWFLPVDARLSGEQPDKLLEHITSLVR.

Residue 55–62 (TAGGNGKT) coordinates ATP.

Belongs to the LpxK family.

It carries out the reaction a lipid A disaccharide + ATP = a lipid IVA + ADP + H(+). It participates in glycolipid biosynthesis; lipid IV(A) biosynthesis; lipid IV(A) from (3R)-3-hydroxytetradecanoyl-[acyl-carrier-protein] and UDP-N-acetyl-alpha-D-glucosamine: step 6/6. Its function is as follows. Transfers the gamma-phosphate of ATP to the 4'-position of a tetraacyldisaccharide 1-phosphate intermediate (termed DS-1-P) to form tetraacyldisaccharide 1,4'-bis-phosphate (lipid IVA). This chain is Tetraacyldisaccharide 4'-kinase, found in Salmonella heidelberg (strain SL476).